Reading from the N-terminus, the 795-residue chain is Delta-1-pyrroline-5-carboxylate synthase (795 aa).

The glutamate 5-kinase stretch occupies residues 1 to 361 (MLSQVYRCGF…FFSEVKPAGP (361 aa)). The substrate site is built by Ser-117, Asp-223, and Asn-246. ATP contacts are provided by residues 266–267 (SD) and 305–311 (MGGMEAK). Lys-311, Lys-347, and Lys-550 each carry N6-succinyllysine. The tract at residues 362 to 795 (TVEQQGEMAR…NLPIPQRNTN (434 aa)) is gamma-glutamyl phosphate reductase.

It in the N-terminal section; belongs to the glutamate 5-kinase family. This sequence in the C-terminal section; belongs to the gamma-glutamyl phosphate reductase family. In terms of assembly, can form homodimers/multimers.

The protein resides in the mitochondrion. It localises to the mitochondrion matrix. It catalyses the reaction L-glutamate + ATP = L-glutamyl 5-phosphate + ADP. The catalysed reaction is L-glutamate 5-semialdehyde + phosphate + NADP(+) = L-glutamyl 5-phosphate + NADPH + H(+). It participates in amino-acid biosynthesis; L-proline biosynthesis; L-glutamate 5-semialdehyde from L-glutamate: step 1/2. It functions in the pathway amino-acid biosynthesis; L-proline biosynthesis; L-glutamate 5-semialdehyde from L-glutamate: step 2/2. Isoform Short: Inhibited by L-ornithine with a Ki of approximately 0.25 mm. Isoform Long: Insensitive to ornithine inhibition. This is due to the two amino acid insert which abolishes feedback inhibition of P5CS activity by L-ornithine. Functionally, bifunctional enzyme that converts glutamate to glutamate 5-semialdehyde, an intermediate in the biosynthesis of proline, ornithine and arginine. The protein is Delta-1-pyrroline-5-carboxylate synthase (ALDH18A1) of Homo sapiens (Human).